We begin with the raw amino-acid sequence, 426 residues long: RuvB-like protein 1 (426 aa).

ATP is bound at residue 62–69 (GPVGSGKT).

This sequence belongs to the RuvB family. In terms of assembly, component of the SWR1 chromatin remodeling complex, the INO80 chromatin remodeling complex, and of the R2TP complex.

The protein resides in the nucleus. The enzyme catalyses ATP + H2O = ADP + phosphate + H(+). Functionally, DNA helicase which participates in several chromatin remodeling complexes, including the SWR1 and the INO80 complexes. The SWR1 complex mediates the ATP-dependent exchange of histone H2A for the H2A variant HZT1 leading to transcriptional regulation of selected genes by chromatin remodeling. The INO80 complex remodels chromatin by shifting nucleosomes and is involved in DNA repair. Also involved in pre-rRNA processing. The chain is RuvB-like protein 1 (RVB1) from Encephalitozoon cuniculi (strain GB-M1) (Microsporidian parasite).